The following is a 417-amino-acid chain: Acetyltransferase nanB (417 aa).

A signal peptide spans 1–24; that stretch reads MRPSTTTLSLLVFLISSILLATTG. 5 helical membrane-spanning segments follow: residues 150–170, 284–304, 307–327, 356–376, and 389–409; these read LAVS…LKNI, YLNN…FNWI, VQDG…GYFL, VGAL…VYPF, and FVDV…AAAL.

The protein belongs to the wax synthase family.

It is found in the membrane. The protein operates within secondary metabolite biosynthesis. Its function is as follows. Acetyltransferase; part of the gene cluster that mediates the biosynthesis of the benzazepine alkaloid nanangelenin A which contains an unprecedented 3,4-dihydro-1-benzazepine-2,5-dione-N-prenyl-N-acetoxy-anthranilamide scaffold. The first step of nanangelenin biosynthesis is catalyzed by the indoleamine 2,3-dioxygenase nanC which produces N-formyl-kynurenine through the catabolism of tryptophan. The two-module NRPS nanA then utilizes anthranilate (Ant) and L-kynurenine (L-Kyn) to assemble the dipeptide product nanangelenin B. The first adenylation domain of nanA (A1) loads anthranilate onto the T1 domain, while A2 loads kynurenine, generated through spontaneous nonenzymatic deformylation of the nanC-supplied N-formyl-kynurenine. The peptide bond formation between the tethered amino acids is catalyzed by the first condensation domain (C1) between anthranilate's carbonyl carbon and kynurenine's aliphatic primary amine. The second C domain (C2) catalyzes the final cyclization event between the aromatic amine of kynurenine and the tethered carbonyl carbon, yielding nanangelenin B. The terminal T3 domain enhances the catalytic efficiency of C2, suggesting the T2-tethered Ant-L-Kyn is transferred to T3 prior to cyclization by C2. Once released from nanA, nanangelenin B is then prenylated by the prenyltransferase nanD to form nanangelenin C. Nanangelenin C is then N-hydroxylated by the FAD-dependent monooxygenase nanF and further acetylated by the acetyltransferase nanB to yield nanangelenin F. Finally, the N-methyltransferase nanE methylates the amide nitrogen of 1-benzazepine to convert nanangelenin F into nanangelenin A. NanE is also able to methylate most of the intermediates of the pathway such as nanangelenin B and nanangelenin C to produce nanangelenin D and nanangelenin E, respectively. The chain is Acetyltransferase nanB from Aspergillus nanangensis.